Consider the following 76-residue polypeptide: High-potential iron-sulfur protein isozyme 2 (76 aa).

4 residues coordinate [4Fe-4S] cluster: C38, C41, C54, and C70.

The protein belongs to the high-potential iron-sulfur protein (HiPIP) family. Homodimer.

Functionally, specific class of high-redox-potential 4Fe-4S ferredoxins. Functions in anaerobic electron transport in most purple and in some other photosynthetic bacteria and in at least one genus (Paracoccus) of halophilic, denitrifying bacteria. The polypeptide is High-potential iron-sulfur protein isozyme 2 (hip2) (Halorhodospira halophila (Ectothiorhodospira halophila)).